The chain runs to 945 residues: Splicing factor, suppressor of white-apricot homolog (945 aa).

2 disordered regions span residues 1–28 (MYGA…GTGT) and 157–190 (YYDP…PFIA). Basic and acidic residues-rich tracts occupy residues 9 to 21 (AKAE…KEEA) and 169 to 178 (PSKQREKSEA). One copy of the SURP motif 1 repeat lies at 211 to 253 (IIERTANFVCKQGAQFEIMLKAKQARNSQFDFLRFDHYLNPYY). Residues 269 to 298 (AESKSEEKKKSGPTSDNEEEDDEEDGSYLH) are disordered. Ser-283 is modified (phosphoserine). Residues 284-294 (DNEEEDDEEDG) show a composition bias toward acidic residues. Lys-315 is subject to N6-acetyllysine. Disordered stretches follow at residues 332-355 (KAQA…PSQV) and 403-438 (SSSP…STTT). Low complexity predominate over residues 335–352 (ADSSAPAPPTADGTPAQP). The segment covering 412-425 (VPPPPGTTPPPPPT) has biased composition (pro residues). Positions 426 to 438 (TAESSSGVTSTTT) are enriched in low complexity. Residues 458 to 498 (VIDKLAEYVARNGLKFETSVRAKNDQRFEFLQPWHQYNAYY) form an SURP motif 2 repeat. Disordered stretches follow at residues 512 to 566 (GSTQ…TVDG), 589 to 680 (PLEK…QAER), and 714 to 921 (GVMP…VQSK). Over residues 514 to 527 (TQAASTAEEAPTET) the composition is skewed to low complexity. The span at 528-540 (AVEESSEAGEDGA) shows a compositional bias: acidic residues. Residues 589–598 (PLEKNRVKLD) are compositionally biased toward basic and acidic residues. Phosphoserine is present on residues Ser-601 and Ser-621. The span at 615 to 630 (SSVANPSPAAAPPSAV) shows a compositional bias: low complexity. Residues 632–686 (EEKKPQLTQEELEAKQAKQKLEDRLAAAAREKLAQASKESKEKQLQAERKRKAAL) are a coiled coil. At Thr-639 the chain carries Phosphothreonine. Basic and acidic residues-rich tracts occupy residues 643-679 (LEAK…LQAE) and 733-752 (KPPE…EERE). 2 stretches are compositionally biased toward basic residues: residues 753 to 787 (KKKK…KAKH) and 795 to 810 (TVRR…RRRA). The span at 811–821 (HSPERRREDRS) shows a compositional bias: basic and acidic residues. Residues Ser-829 and Ser-831 each carry the phosphoserine modification. Basic residues predominate over residues 835–861 (SRKRTRSRSPHEKKKKRRSRSRTKAKA). A compositionally biased stretch (low complexity) spans 871 to 894 (QAAQRPSAHSAHSASISPVESRGS). Residues 895–908 (SQERSRGVSQEKDG) show a composition bias toward basic and acidic residues. 2 positions are modified to phosphoserine: Ser-899 and Ser-903. Low complexity predominate over residues 909-920 (QISSAIVSSVQS).

It is found in the nucleus. Plays a role as an alternative splicing regulator. Regulate its own expression at the level of RNA processing. Also regulates the splicing of fibronectin and CD45 genes. May act, at least in part, by interaction with other R/S-containing splicing factors. Represses the splicing of MAPT/Tau exon 10. This Rattus norvegicus (Rat) protein is Splicing factor, suppressor of white-apricot homolog (Sfswap).